Here is a 901-residue protein sequence, read N- to C-terminus: Probable inorganic carbon transporter subunit DabA (901 aa).

Zn(2+) contacts are provided by Cys424, Asp426, His606, and Cys621.

Belongs to the inorganic carbon transporter (TC 9.A.2) DabA family. As to quaternary structure, forms a complex with DabB. Zn(2+) serves as cofactor.

The protein resides in the cell membrane. Functionally, part of an energy-coupled inorganic carbon pump. This Staphylococcus aureus (strain Mu3 / ATCC 700698) protein is Probable inorganic carbon transporter subunit DabA.